Consider the following 189-residue polypeptide: Endoribonuclease YbeY (189 aa).

3 residues coordinate Zn(2+): His-146, His-150, and His-156.

It belongs to the endoribonuclease YbeY family. Zn(2+) serves as cofactor.

Its subcellular location is the cytoplasm. Single strand-specific metallo-endoribonuclease involved in late-stage 70S ribosome quality control and in maturation of the 3' terminus of the 16S rRNA. In Prochlorococcus marinus (strain MIT 9211), this protein is Endoribonuclease YbeY.